Reading from the N-terminus, the 139-residue chain is Transcription factor E (139 aa).

The HTH TFE/IIEalpha-type domain occupies 7–91; that stretch reads IINKKQDEVS…DYEKILDTLL (85 aa).

It belongs to the TFE family. Monomer. Interaction with RNA polymerase subunits RpoF and RpoE is necessary for Tfe stimulatory transcription activity. Able to interact with Tbp and RNA polymerase in the absence of DNA promoter. Interacts both with the preinitiation and elongation complexes.

Functionally, transcription factor that plays a role in the activation of archaeal genes transcribed by RNA polymerase. Facilitates transcription initiation by enhancing TATA-box recognition by TATA-box-binding protein (Tbp), and transcription factor B (Tfb) and RNA polymerase recruitment. Not absolutely required for transcription in vitro, but particularly important in cases where Tbp or Tfb function is not optimal. It dynamically alters the nucleic acid-binding properties of RNA polymerases by stabilizing the initiation complex and destabilizing elongation complexes. Seems to translocate with the RNA polymerase following initiation and acts by binding to the non template strand of the transcription bubble in elongation complexes. The chain is Transcription factor E from Nanoarchaeum equitans (strain Kin4-M).